Here is a 449-residue protein sequence, read N- to C-terminus: MSAPAQNYKIADISLAAFGRKEIELAEHEMPGLMAIRKAYGDVQPLKGARIAGCLHMTIQTAVLIETLVALGAEVTWSSCNIYSTQDHAAAAIAASGVPVFAWKGETEEEYLWCIEQQLFAFKDNKKLNLILDDGGDLTTLVHEKHPEMLEDCFGLSEETTTGVHHLYRMVKEGKLKVPAINVNDSVTKSKFDNLYGCRESLVDGIKRATDVMLAGKVAVVAGYGDVGKGCAAALRGMGARVLVTEIDPINALQAAMEGYQVVTMEDASHIGQVFVTTTGCRDIINGEHFINMPEDAIVCNIGHFDIEIDVAWLKANAKECINIKPQVDRYLLSSGRHVILLANGRLVNLGCATGHSSFVMSCSFSNQVLAQIALFKSNDKSFREKHIEFQKTGPFEVGVHVLPKILDEAVAKFHLGNLGVRLTKLSKVQSEYLGIPEEGPFKADHYRY.

Ser-2 carries the post-translational modification N-acetylserine. Lys-21 is covalently cross-linked (Glycyl lysine isopeptide (Lys-Gly) (interchain with G-Cter in ubiquitin)). The substrate site is built by Thr-58, Asp-134, and Glu-159. NAD(+) is bound at residue 160–162 (TTT). Substrate-binding residues include Lys-189 and Asp-193. NAD(+)-binding positions include Asn-194, 223 to 228 (GYGDVG), Glu-246, 302 to 304 (IGH), and Asn-349. At Thr-393 the chain carries Phosphothreonine. Lys-413 is covalently cross-linked (Glycyl lysine isopeptide (Lys-Gly) (interchain with G-Cter in ubiquitin)).

Belongs to the adenosylhomocysteinase family. NAD(+) is required as a cofactor.

It catalyses the reaction S-adenosyl-L-homocysteine + H2O = L-homocysteine + adenosine. It functions in the pathway amino-acid biosynthesis; L-homocysteine biosynthesis; L-homocysteine from S-adenosyl-L-homocysteine: step 1/1. Functionally, adenosylhomocysteine is a competitive inhibitor of S-adenosyl-L-methionine-dependent methyl transferase reactions; therefore adenosylhomocysteinase may play a key role in the control of methylations via regulation of the intracellular concentration of adenosylhomocysteine. The polypeptide is Adenosylhomocysteinase (SAH1) (Saccharomyces cerevisiae (strain ATCC 204508 / S288c) (Baker's yeast)).